Consider the following 254-residue polypeptide: Geranylgeranylglyceryl phosphate synthase (254 aa).

Residues Asp28 and Ser57 each contribute to the Mg(2+) site. Sn-glycerol 1-phosphate is bound by residues 176–182 (YLEAGSG), 207–208 (GG), and 229–230 (GT).

This sequence belongs to the GGGP/HepGP synthase family. Group II subfamily. It depends on Mg(2+) as a cofactor.

The protein localises to the cytoplasm. The enzyme catalyses sn-glycerol 1-phosphate + (2E,6E,10E)-geranylgeranyl diphosphate = sn-3-O-(geranylgeranyl)glycerol 1-phosphate + diphosphate. Its pathway is membrane lipid metabolism; glycerophospholipid metabolism. Its function is as follows. Prenyltransferase that catalyzes the transfer of the geranylgeranyl moiety of geranylgeranyl diphosphate (GGPP) to the C3 hydroxyl of sn-glycerol-1-phosphate (G1P). This reaction is the first ether-bond-formation step in the biosynthesis of archaeal membrane lipids. The sequence is that of Geranylgeranylglyceryl phosphate synthase from Pyrococcus horikoshii (strain ATCC 700860 / DSM 12428 / JCM 9974 / NBRC 100139 / OT-3).